The primary structure comprises 109 residues: Small ribosomal subunit protein uS15c (109 aa).

This sequence belongs to the universal ribosomal protein uS15 family. Part of the 30S ribosomal subunit.

It localises to the plastid. It is found in the chloroplast. This chain is Small ribosomal subunit protein uS15c (rps15-A), found in Trachelium caeruleum (Blue throatwort).